The primary structure comprises 263 residues: Orotidine 5'-phosphate decarboxylase (263 aa).

Residues Asp38, 60–62 (KTH), 91–100 (DRKFADIGNT), Tyr213, and Arg232 each bind substrate. Residue Lys93 is the Proton donor of the active site.

This sequence belongs to the OMP decarboxylase family.

It catalyses the reaction orotidine 5'-phosphate + H(+) = UMP + CO2. It functions in the pathway pyrimidine metabolism; UMP biosynthesis via de novo pathway; UMP from orotate: step 2/2. This Rhizomucor pusillus protein is Orotidine 5'-phosphate decarboxylase (PYR4).